The following is a 735-amino-acid chain: E3 ubiquitin-protein ligase SH3RF2 (735 aa).

The RING-type zinc-finger motif lies at 12-53 (CPVCFEKLDVTAKVLPCQHTFCKPCLQRIFKAHKELRCPECR). SH3 domains are found at residues 125–184 (DGVP…VIKQ) and 187–252 (QPPP…PNLS). Disordered stretches follow at residues 260 to 301 (SKGH…GSGQ) and 335 to 373 (TSPS…STAM). The segment covering 273 to 289 (LMSSPSRGKATNTSTLR) has biased composition (polar residues). The interaction with PAK4 stretch occupies residues 373–466 (MVSVPSSQQH…RHPTVCTTWA (94 aa)). Positions 383 to 444 (LSTNMFVALH…PSDYVIPVFS (62 aa)) constitute an SH3 3 domain. 3 disordered regions span residues 472–534 (VSSQ…PVQS), 612–637 (ETPI…KPEN), and 649–735 (VRFQ…FPSK). Polar residues predominate over residues 523–534 (RKNGSLQRPVQS). Over residues 617–627 (SEPPPKPPASA) the composition is skewed to pro residues. The interval 647–652 (KTVRFQ) is interaction with PPP1CA. A Phosphoserine modification is found at Ser-655. Residues 715–735 (FSKTTPPVSTASVSQTLFPSK) show a composition bias toward polar residues.

Belongs to the SH3RF family. Interacts with FASLG and PPP1CA. Interacts with PAK4 and TNFRSF1A. Interacts with DLK1, MAP3K10, MAPK8IP1/JIP1, MAPK8IP2/JIP2 and MAPK8IP3/JIP3. Interacts with RAC1 (both active GTP- or inactive GDP-bound forms). Autoubiquitinated.

Its subcellular location is the nucleus. It carries out the reaction S-ubiquitinyl-[E2 ubiquitin-conjugating enzyme]-L-cysteine + [acceptor protein]-L-lysine = [E2 ubiquitin-conjugating enzyme]-L-cysteine + N(6)-ubiquitinyl-[acceptor protein]-L-lysine.. It functions in the pathway protein modification; protein ubiquitination. Has E3 ubiquitin-protein ligase activity. Acts as an anti-apoptotic regulator of the JNK pathway by ubiquitinating and promoting the degradation of SH3RF1, a scaffold protein that is required for pro-apoptotic JNK activation. Facilitates TNF-alpha-mediated recruitment of adapter proteins TRADD and RIPK1 to TNFRSF1A and regulates PAK4 protein stability via inhibition of its ubiquitin-mediated proteasomal degradation. Inhibits PPP1CA phosphatase activity. This Rattus norvegicus (Rat) protein is E3 ubiquitin-protein ligase SH3RF2 (Sh3rf2).